The sequence spans 293 residues: Small ribosomal subunit protein uS2 (293 aa).

The tract at residues 239-293 (PAGGADWEAAPAGFPAAATGEWSEAQPATWESGAAAATGPSTEWADSAPKDTAGW) is disordered. Low complexity predominate over residues 247–256 (AAPAGFPAAA).

The protein belongs to the universal ribosomal protein uS2 family. Component of the small ribosomal subunit. Mature ribosomes consist of a small (40S) and a large (60S) subunit. The 40S subunit contains about 33 different proteins and 1 molecule of RNA (18S). The 60S subunit contains about 49 different proteins and 3 molecules of RNA (25S, 5.8S and 5S). Interacts with RPS21.

The protein resides in the cytoplasm. Its function is as follows. Required for the assembly and/or stability of the 40S ribosomal subunit. Required for the processing of the 20S rRNA-precursor to mature 18S rRNA in a late step of the maturation of 40S ribosomal subunits. The chain is Small ribosomal subunit protein uS2 from Chaetomium globosum (strain ATCC 6205 / CBS 148.51 / DSM 1962 / NBRC 6347 / NRRL 1970) (Soil fungus).